Here is a 135-residue protein sequence, read N- to C-terminus: Holo-[acyl-carrier-protein] synthase (135 aa).

Mg(2+)-binding residues include aspartate 8 and glutamate 57.

This sequence belongs to the P-Pant transferase superfamily. AcpS family. Requires Mg(2+) as cofactor.

Its subcellular location is the cytoplasm. It carries out the reaction apo-[ACP] + CoA = holo-[ACP] + adenosine 3',5'-bisphosphate + H(+). In terms of biological role, transfers the 4'-phosphopantetheine moiety from coenzyme A to a Ser of acyl-carrier-protein. In Methylobacterium sp. (strain 4-46), this protein is Holo-[acyl-carrier-protein] synthase.